The following is a 227-amino-acid chain: MKAVVLLSGGMDSLVTTAIAHNEGLQLAAMHVNYGQRTWQRELESFRSIAGHYGIGELLEVNADFLGTIGGSSLTDHTMAVSGADLQGTAIPTSYVPFRNACFLSMAVSWAEVIGAQKLYIGAVEEDSSGYPDCRKVFYDAFNKVIELGTKPETGIEILTPLIAMQKAGIVEKGMELDAPFHYSWSCYKSEGKACGVCDSCARRLRAFELVGVRDPIDYDVRPQYIH.

7-17 (LSGGMDSLVTT) serves as a coordination point for ATP. C187, C195, C198, and C201 together coordinate Zn(2+).

It belongs to the QueC family. Zn(2+) serves as cofactor.

The catalysed reaction is 7-carboxy-7-deazaguanine + NH4(+) + ATP = 7-cyano-7-deazaguanine + ADP + phosphate + H2O + H(+). It functions in the pathway purine metabolism; 7-cyano-7-deazaguanine biosynthesis. Its function is as follows. Catalyzes the ATP-dependent conversion of 7-carboxy-7-deazaguanine (CDG) to 7-cyano-7-deazaguanine (preQ(0)). The polypeptide is 7-cyano-7-deazaguanine synthase (Chlorobium phaeovibrioides (strain DSM 265 / 1930) (Prosthecochloris vibrioformis (strain DSM 265))).